Consider the following 360-residue polypeptide: Epoxide hydrolase 3 (360 aa).

A helical transmembrane segment spans residues 22–42; sequence AFMWSLVFSVALVAAAVYGCI. Asp173 (nucleophile) is an active-site residue. Residue Tyr281 is the Proton donor of the active site. His337 functions as the Proton acceptor in the catalytic mechanism.

Belongs to the AB hydrolase superfamily. Epoxide hydrolase family.

It is found in the microsome membrane. The enzyme catalyses an epoxide + H2O = an ethanediol. It catalyses the reaction 9,10-epoxyoctadecanoate + H2O = 9,10-dihydroxyoctadecanoate. The catalysed reaction is 9,10-epoxy-(12Z)-octadecenoate + H2O = 9,10-dihydroxy-(12Z)-octadecenoate. It carries out the reaction 8,9-epoxy-(5Z,11Z,14Z)-eicosatrienoate + H2O = 8,9-dihydroxy-(5Z,11Z,14Z)-eicosatrienoate. The enzyme catalyses 11,12-epoxy-(5Z,8Z,14Z)-eicosatrienoate + H2O = 11,12-dihydroxy-(5Z,8Z,14Z)-eicosatrienoate. It catalyses the reaction 14,15-epoxy-(5Z,8Z,11Z)-eicosatrienoate + H2O = 14,15-dihydroxy-(5Z,8Z,11Z)-eicosatrienoate. With respect to regulation, inhibited by 1-(1-acetylpiperidin-4-yl)-3-(4-(trifl uoromethoxy)phenyl)urea (TPAU), 1-cyclohexyl-3-dodecylurea (CDU), 12-(3-adamantan-1-yl-ureido)-dodecanoic acid (AUDA), 1-((3S, 5S, 7S)-adamantan-1-yl)-3-(5-(2-(2-ethoxyethoxy) ethoxy)pentyl)urea (AEPU) and to a lesser extent by 8-(3-((3S, 5S, 7S)-adamantan-1-yl)ureido) octanoic acid (AUOA). Functionally, catalyzes the hydrolysis of epoxide-containing fatty acids. Active in vitro against epoxyeicosatrienoic acids (EETs) including 8,9-EET, 9,10-EET, 11,12-EET and 14,15-EET and leukotoxin. This Homo sapiens (Human) protein is Epoxide hydrolase 3 (EPHX3).